We begin with the raw amino-acid sequence, 453 residues long: tRNA modification GTPase MnmE (453 aa).

Residues R22, E79, and K119 each contribute to the (6S)-5-formyl-5,6,7,8-tetrahydrofolate site. Residues 215–376 form the TrmE-type G domain; sequence GMKVVIAGRP…LRQHLKECMG (162 aa). Residue N225 participates in K(+) binding. Residues 225–230, 244–250, 269–272, and 334–337 each bind GTP; these read NAGKSS, TDIAGTT, DTAG, and NKAD. Residue S229 coordinates Mg(2+). K(+)-binding residues include T244, I246, and T249. Residue T250 coordinates Mg(2+). Residue K453 coordinates (6S)-5-formyl-5,6,7,8-tetrahydrofolate.

Belongs to the TRAFAC class TrmE-Era-EngA-EngB-Septin-like GTPase superfamily. TrmE GTPase family. In terms of assembly, homodimer. Heterotetramer of two MnmE and two MnmG subunits. Requires K(+) as cofactor.

It localises to the cytoplasm. In terms of biological role, exhibits a very high intrinsic GTPase hydrolysis rate. Involved in the addition of a carboxymethylaminomethyl (cmnm) group at the wobble position (U34) of certain tRNAs, forming tRNA-cmnm(5)s(2)U34. This is tRNA modification GTPase MnmE from Vibrio cholerae serotype O1 (strain ATCC 39315 / El Tor Inaba N16961).